A 461-amino-acid chain; its full sequence is Photosystem II CP43 reaction center protein (461 aa).

Positions 1-2 (ME) are excised as a propeptide. Threonine 3 is subject to N-acetylthreonine. Position 3 is a phosphothreonine (threonine 3). Helical transmembrane passes span 57-81 (LFEV…PHLA), 122-143 (LLGP…KDRN), 166-188 (KALY…RKIS), 243-263 (KPFA…LSYS), and 279-300 (WFNN…ASQA). Position 355 (glutamate 355) interacts with [CaMn4O5] cluster. A helical membrane pass occupies residues 435-459 (RARAAAAGFEKGIDRDFEPVLSMTP).

It belongs to the PsbB/PsbC family. PsbC subfamily. In terms of assembly, PSII is composed of 1 copy each of membrane proteins PsbA, PsbB, PsbC, PsbD, PsbE, PsbF, PsbH, PsbI, PsbJ, PsbK, PsbL, PsbM, PsbT, PsbX, PsbY, PsbZ, Psb30/Ycf12, at least 3 peripheral proteins of the oxygen-evolving complex and a large number of cofactors. It forms dimeric complexes. It depends on Binds multiple chlorophylls and provides some of the ligands for the Ca-4Mn-5O cluster of the oxygen-evolving complex. It may also provide a ligand for a Cl- that is required for oxygen evolution. PSII binds additional chlorophylls, carotenoids and specific lipids. as a cofactor.

It is found in the plastid. The protein localises to the chloroplast thylakoid membrane. Functionally, one of the components of the core complex of photosystem II (PSII). It binds chlorophyll and helps catalyze the primary light-induced photochemical processes of PSII. PSII is a light-driven water:plastoquinone oxidoreductase, using light energy to abstract electrons from H(2)O, generating O(2) and a proton gradient subsequently used for ATP formation. The protein is Photosystem II CP43 reaction center protein of Trachelium caeruleum (Blue throatwort).